We begin with the raw amino-acid sequence, 273 residues long: Phosphate import ATP-binding protein PstB (273 aa).

The 240-residue stretch at I18 to N257 folds into the ABC transporter domain. Residue G50–S57 participates in ATP binding.

This sequence belongs to the ABC transporter superfamily. Phosphate importer (TC 3.A.1.7) family. As to quaternary structure, the complex is composed of two ATP-binding proteins (PstB), two transmembrane proteins (PstC and PstA) and a solute-binding protein (PstS).

The protein resides in the cell inner membrane. The enzyme catalyses phosphate(out) + ATP + H2O = ADP + 2 phosphate(in) + H(+). In terms of biological role, part of the ABC transporter complex PstSACB involved in phosphate import. Responsible for energy coupling to the transport system. In Prochlorococcus marinus (strain SARG / CCMP1375 / SS120), this protein is Phosphate import ATP-binding protein PstB.